The following is a 136-amino-acid chain: Large ribosomal subunit protein uL16 (136 aa).

It belongs to the universal ribosomal protein uL16 family. Part of the 50S ribosomal subunit.

Its function is as follows. Binds 23S rRNA and is also seen to make contacts with the A and possibly P site tRNAs. In Bradyrhizobium diazoefficiens (strain JCM 10833 / BCRC 13528 / IAM 13628 / NBRC 14792 / USDA 110), this protein is Large ribosomal subunit protein uL16.